A 317-amino-acid polypeptide reads, in one-letter code: 2-keto-3-deoxygluconate permease 1 (317 aa).

The next 10 helical transmembrane spans lie at 10–30 (VPGGMMVVPLVIGAVINTFAP), 47–67 (AAPLIGAFLLCMGAGISVKAA), 82–102 (LLVAIGIGLGVEHLFGAEGIF), 106–126 (GVAIIAAMSNSNGGLYAALVG), 134–154 (VGAISILSLNDGPFFTMIALG), 159–179 (ANIPIMALVAVLVPLVVGMIL), 195–215 (PLLIPFFAFALGAGINLEMLL), 217–237 (GGLAGILLGVLTTFVGGFFNI), 248–268 (IAGAAASSTAGNAVATPLAIA), and 279–299 (AAAAPLIAASVITTAILTPVL).

The protein belongs to the KdgT transporter family.

It is found in the cell inner membrane. The catalysed reaction is 2-dehydro-3-deoxy-D-gluconate(in) + H(+)(in) = 2-dehydro-3-deoxy-D-gluconate(out) + H(+)(out). Catalyzes the proton-dependent uptake of 2-keto-3-deoxygluconate (KDG) into the cell. This is 2-keto-3-deoxygluconate permease 1 from Salmonella typhi.